Reading from the N-terminus, the 100-residue chain is uncharacterized protein (100 aa).

The segment at 78–100 (KPYRTESGTSSSNRMMLPPRQHV) is disordered.

This is an uncharacterized protein from Caenorhabditis elegans.